The sequence spans 288 residues: Syntaxin-1A (288 aa).

Topologically, residues 1-265 are cytoplasmic; it reads MKDRTQELRT…KYQSKARRKK (265 aa). Residues serine 14, serine 64, and serine 95 each carry the phosphoserine modification. The stretch at 68-109 forms a coiled coil; it reads DEKTKEELEELMSDIKKTANKVRSKLKSIEQSIEQEEGLNRS. Serine 188 bears the Phosphoserine; by DAPK1 mark. The t-SNARE coiled-coil homology domain maps to 192 to 254; sequence LSEIETRHSE…ERAVSDTKKA (63 aa). Glycyl lysine isopeptide (Lys-Gly) (interchain with G-Cter in SUMO) cross-links involve residues lysine 252, lysine 253, and lysine 256. Residues 266–286 form a helical; Anchor for type IV membrane protein membrane-spanning segment; that stretch reads IMIIICCVILGIVIASTVGGI. Residues 287-288 are Extracellular-facing; the sequence is FA.

The protein belongs to the syntaxin family. In terms of assembly, part of the SNARE core complex containing SNAP25, VAMP2 and STX1A; this complex constitutes the basic catalytic machinery of the complex neurotransmitter release apparatus. The SNARE complex interacts with CPLX1. Interacts with STXBP1. The interaction with STXBP1 promotes assembly of the SNARE complex. Interacts (via C-terminus) with KCNB1 (via C-terminus); the interaction increases in a calcium-dependent manner and induces a pore-independent enhancement of exocytosis in neuroendocrine cells, chromaffin cells, pancreatic beta cells and from the soma of dorsal root ganglia (DRG) neurons. Interacts with SYTL4. Interacts with STXBP6. Interacts with PLCL1 (via C2 domain). Interacts with OTOF. Interacts with LGI3. Interacts (via the H3 domain) with SLC6A4 (via the N-terminus); this interaction regulates SLC4A6 channel conductance in thalamocortical neurons. Interacts with SYT6 and SYT8; the interaction is Ca(2+)-dependent. Interacts with VAMP8. Interacts with SNAP23. Interacts with VAPA and SYBU. Interacts with PRRT2. Interacts with SEPT8. Interacts with STXBP5L. Interacts with synaptotagmin-1/SYT1. Interacts with SEPTIN5; in the cerebellar cortex. Interacts with SEPTIN4; in the striatum. In terms of processing, phosphorylated by CK2. Phosphorylation at Ser-188 by DAPK1 significantly decreases its interaction with STXBP1. Sumoylated, sumoylation is required for regulation of synaptic vesicle endocytosis. In terms of tissue distribution, highly expressed in embryonic spinal cord and ganglia and in adult cerebellum and cerebral cortex. As to expression, expressed in heart, liver, fat, skeletal muscle, kidney and brain.

The protein resides in the cytoplasmic vesicle. It is found in the secretory vesicle. Its subcellular location is the synaptic vesicle membrane. The protein localises to the synapse. It localises to the synaptosome. The protein resides in the cell membrane. It is found in the secreted. In terms of biological role, plays an essential role in hormone and neurotransmitter calcium-dependent exocytosis and endocytosis. Part of the SNARE (Soluble NSF Attachment Receptor) complex composed of SNAP25, STX1A and VAMP2 which mediates the fusion of synaptic vesicles with the presynaptic plasma membrane. STX1A and SNAP25 are localized on the plasma membrane while VAMP2 resides in synaptic vesicles. The pairing of the three SNAREs from the N-terminal SNARE motifs to the C-terminal anchors leads to the formation of the SNARE complex, which brings membranes into close proximity and results in final fusion. Participates in the calcium-dependent regulation of acrosomal exocytosis in sperm. Also plays an important role in the exocytosis of hormones such as insulin or glucagon-like peptide 1 (GLP-1). The protein is Syntaxin-1A (STX1A) of Homo sapiens (Human).